Reading from the N-terminus, the 467-residue chain is Protein PHOSPHATE STARVATION RESPONSE 3 (467 aa).

The tract at residues 227–266 is disordered; the sequence is MSLPVSSCSDQEDLQDARSPAKVQLSSSRSSSGTASCNKP. The 61-residue stretch at 262–322 folds into the HTH myb-type domain; the sequence is SCNKPRLRWT…HLQKYRLAKY (61 aa). The H-T-H motif DNA-binding region spans 293–318; it reads PKGVLKLMKVEGLTIYHIKSHLQKYR. The segment covering 327–337 has biased composition (basic and acidic residues); that stretch reads KEDKKQEEKKT. Disordered stretches follow at residues 327–353 and 400–467; these read KEDK…KSAQ and RESI…VHDE. The segment covering 402–412 has biased composition (polar residues); sequence SISSMTSTTEG. Basic and acidic residues-rich tracts occupy residues 419 to 428 and 438 to 467; these read PMEKTEDKAE and RITD…VHDE.

In terms of tissue distribution, expressed in the root cap and in the exodermis of the root, in the root tip of lateral roots, in the mesophyll cells of the leaf, in pollen, vascular cylinder of the anther and the veins of the lemma, palea and pistils, and in the xylem and phloem regions of large vascular bundles, small vascular bundles and diffuse vascular bundles in node I.

It is found in the nucleus. Functionally, transcription factor involved in phosphate starvation signaling. Binds to P1BS, an imperfect palindromic sequence 5'-GNATATNC-3', to promote the expression of inorganic phosphate (Pi) starvation-responsive genes. Functionally redundant with PHR1 and PHR2 in regulating Pi starvation response and Pi homeostasis. This is Protein PHOSPHATE STARVATION RESPONSE 3 from Oryza sativa subsp. japonica (Rice).